Consider the following 265-residue polypeptide: Non-seed lectin (265 aa).

The segment at residues 1–21 (MALYRTKELVSLVSIMFVLLA) is a signal peptide (or 23). N-linked (GlcNAc...) asparagine glycans are attached at residues N59 and N127.

It belongs to the leguminous lectin family. In terms of assembly, monomer. Most highly expressed in the epidermal layer of developing shoot tips.

In Pisum sativum (Garden pea), this protein is Non-seed lectin.